Consider the following 565-residue polypeptide: Probable beta-glucosidase btgE (565 aa).

The first 18 residues, Met-1–Ala-18, serve as a signal peptide directing secretion. Positions Thr-246–Ala-304 are disordered. A compositionally biased stretch (low complexity) spans Pro-251–Ala-304. The Proton donor role is filled by Glu-405. Residue Glu-501 is the Nucleophile of the active site.

The protein belongs to the glycosyl hydrolase 17 family.

The protein localises to the secreted. It is found in the cell wall. The enzyme catalyses Hydrolysis of terminal, non-reducing beta-D-glucosyl residues with release of beta-D-glucose.. The protein operates within glycan metabolism; cellulose degradation. Its function is as follows. Beta-glucosidases are one of a number of cellulolytic enzymes involved in the degradation of cellulosic biomass. Catalyzes the last step releasing glucose from the inhibitory cellobiose. This is Probable beta-glucosidase btgE (btgE) from Aspergillus fumigatus (strain CBS 144.89 / FGSC A1163 / CEA10) (Neosartorya fumigata).